We begin with the raw amino-acid sequence, 473 residues long: Cyprosin (473 aa).

Residues 1-33 (LKKRKVNILNHPGEHAGSNDANARRKYGVRGNF) constitute a propeptide, activation peptide. Positions 51 to 470 (YFGEIGIGTP…DYGNLRVGFA (420 aa)) constitute a Peptidase A1 domain. Aspartate 69 is a catalytic residue. Intrachain disulfides connect cysteine 82/cysteine 88 and cysteine 247/cysteine 251. Aspartate 256 is an active-site residue. In terms of domain architecture, Saposin B-type spans 281–384 (VMSQQCKSLV…DKLCERLPSP (104 aa)). 4 disulfide bridges follow: cysteine 286–cysteine 378, cysteine 311–cysteine 350, cysteine 317–cysteine 347, and cysteine 392–cysteine 429. Asparagine 364 is a glycosylation site (N-linked (GlcNAc...) asparagine).

This sequence belongs to the peptidase A1 family. As to expression, mostly present in the violet parts of styles and corollas of mature flowers.

The sequence is that of Cyprosin (CYPRO1) from Cynara cardunculus (Cardoon).